Reading from the N-terminus, the 41-residue chain is Large ribosomal subunit protein bL36 (41 aa).

The protein belongs to the bacterial ribosomal protein bL36 family.

This is Large ribosomal subunit protein bL36 from Bartonella tribocorum (strain CIP 105476 / IBS 506).